Here is a 377-residue protein sequence, read N- to C-terminus: Secreted LysM effector Lys2 (377 aa).

The signal sequence occupies residues 1–22 (MVRQSIGLIALQLLNLVSVAQA). The segment covering 104-119 (TSSSTATTTSQKPTAT) has biased composition (low complexity). The tract at residues 104–124 (TSSSTATTTSQKPTATVSPLP) is disordered. LysM domains lie at 135–182 (KYYN…YVCV) and 207–253 (KYYK…YYCV).

It belongs to the secreted LysM effector family.

Might have a role in sequestration of chitin oligosaccharides (breakdown products of fungal cell walls that are released during invasion and act as triggers of host immunity) to dampen host defense. The sequence is that of Secreted LysM effector Lys2 from Pochonia chlamydosporia (strain 123) (Metacordyceps chlamydosporia).